Consider the following 216-residue polypeptide: UPF0502 protein VCM66_A0698 (216 aa).

Belongs to the UPF0502 family.

This is UPF0502 protein VCM66_A0698 from Vibrio cholerae serotype O1 (strain M66-2).